The following is a 77-amino-acid chain: ATP synthase subunit c (77 aa).

Helical transmembrane passes span 13–33 and 55–75; these read IATVGYGLAAIGPGIGVGIVA and FLGIAFSEALALIGLATYFIF.

It belongs to the ATPase C chain family. As to quaternary structure, F-type ATPases have 2 components, F(1) - the catalytic core - and F(0) - the membrane proton channel. F(1) has five subunits: alpha(3), beta(3), gamma(1), delta(1), epsilon(1). F(0) has three main subunits: a(1), b(2) and c(10-14). The alpha and beta chains form an alternating ring which encloses part of the gamma chain. F(1) is attached to F(0) by a central stalk formed by the gamma and epsilon chains, while a peripheral stalk is formed by the delta and b chains.

It is found in the cell membrane. F(1)F(0) ATP synthase produces ATP from ADP in the presence of a proton or sodium gradient. F-type ATPases consist of two structural domains, F(1) containing the extramembraneous catalytic core and F(0) containing the membrane proton channel, linked together by a central stalk and a peripheral stalk. During catalysis, ATP synthesis in the catalytic domain of F(1) is coupled via a rotary mechanism of the central stalk subunits to proton translocation. Functionally, key component of the F(0) channel; it plays a direct role in translocation across the membrane. A homomeric c-ring of between 10-14 subunits forms the central stalk rotor element with the F(1) delta and epsilon subunits. The chain is ATP synthase subunit c from Clavibacter sepedonicus (Clavibacter michiganensis subsp. sepedonicus).